Consider the following 634-residue polypeptide: MVNDKILYDSCKTFNIDASSAQSLIESGANPLYEYDGETPLKAYVTKKNNNIKNDVVILLLSSVDYKNINDFDIFEYLCSDNIDIDLLKLLISKGIEINSIKNGINIVEKYATTSNPNVDVFKLLLDKGIPTCSNIQYGYKIKIEQIRRAGEYYNWDDELDDYDYDYTTDYDDRMGKTVLYYYIITRSQDGYATSLDVINYLISHKKEMRYYTYREHTTLYYYLDKCDIKREIFDALFDSNYSGHELMNILSNYLRKQFRKKNHKIDNYIVDQLLFDRDTFYILELCNSLRNNILISTILKRYTVSIQDLLLEYVSYHTVYINVIKCMIDEGATLYRFKHINKYFQKFGNRDPKVVEYILKNGNLVVDNDNDDNLINIMPLFPTFSMRELDVLSILKLCKPYIDDINKIDKHGCSILYHCIKSHSVSLVEWLIDNGADINIITKYGFTCITICVILADKYIPEIAELYIKILEIILSKLPTIECIKKTVDYLDDHRYLFIGGNNKSLLKICIKYFILVDYKYTCSMYPSYIEFITDCEKEIADMRQIKINGTDMLTVMYMLNKPTKKRYVNNPIFTDWANKQYKFYNQIIYNANKLIEQSKKIDDMIEEVSIDDNRLSTLPLEIRHLIFSYAFL.

ANK repeat units follow at residues 36 to 69, 70 to 100, 103 to 134, 175 to 211, 307 to 337, and 412 to 441; these read DGET…YKNI, NDFD…EINS, NGIN…PTCS, MGKT…EMRY, IQDL…TLYR, and HGCS…DINI.

Belongs to the orthopoxvirus OPG025 family. Interacts with components of host SCF complex CUL1 and SKP1 and components of the cullin deneddylation/COP9 signalosome complex subunits COPS7A and COPS7B.

Functionally, plays a role in the inhibition of host immune repsonse by counteracting the action of interferons on early events in the viral replication cycle. This is Ankyrin repeat protein OPG025 (OPG025) from Vaccinia virus (strain Copenhagen) (VACV).